Here is a 1143-residue protein sequence, read N- to C-terminus: Major DNA-binding protein (1143 aa).

A required for nuclear localization region spans residues 1140–1143; sequence RMRL.

It belongs to the herpesviridae major DNA-binding protein family. Homooligomers. Forms double-helical filaments necessary for the formation of replication compartments within the host nucleus. Interacts with the origin-binding protein. Interacts with the helicase primase complex; this interaction stimulates primer synthesis activity of the helicase-primase complex. Interacts with the DNA polymerase. Interacts with the alkaline exonuclease; this interaction increases its nuclease processivity.

It localises to the host nucleus. Plays several crucial roles in viral infection. Participates in the opening of the viral DNA origin to initiate replication by interacting with the origin-binding protein. May disrupt loops, hairpins and other secondary structures present on ssDNA to reduce and eliminate pausing of viral DNA polymerase at specific sites during elongation. Promotes viral DNA recombination by performing strand-transfer, characterized by the ability to transfer a DNA strand from a linear duplex to a complementary single-stranded DNA circle. Can also catalyze the renaturation of complementary single strands. Additionally, reorganizes the host cell nucleus, leading to the formation of prereplicative sites and replication compartments. This process is driven by the protein which can form double-helical filaments in the absence of DNA. The chain is Major DNA-binding protein from Elephantid herpesvirus 1 (isolate Asian elephant/Berlin/Kiba/1998) (EIHV-1).